Reading from the N-terminus, the 254-residue chain is Type III pantothenate kinase (254 aa).

6–13 contributes to the ATP binding site; the sequence is DVGNSNIV. Substrate is bound by residues Tyr100 and 107–110; that span reads GADR. The Proton acceptor role is filled by Asp109. Position 129 (Asp129) interacts with K(+). Thr132 serves as a coordination point for ATP. Substrate is bound at residue Thr184.

It belongs to the type III pantothenate kinase family. In terms of assembly, homodimer. It depends on NH4(+) as a cofactor. The cofactor is K(+).

It localises to the cytoplasm. The catalysed reaction is (R)-pantothenate + ATP = (R)-4'-phosphopantothenate + ADP + H(+). It participates in cofactor biosynthesis; coenzyme A biosynthesis; CoA from (R)-pantothenate: step 1/5. Functionally, catalyzes the phosphorylation of pantothenate (Pan), the first step in CoA biosynthesis. The polypeptide is Type III pantothenate kinase (Citrifermentans bemidjiense (strain ATCC BAA-1014 / DSM 16622 / JCM 12645 / Bem) (Geobacter bemidjiensis)).